A 103-amino-acid chain; its full sequence is Small ribosomal subunit protein uS10 (103 aa).

The protein belongs to the universal ribosomal protein uS10 family. Part of the 30S ribosomal subunit.

In terms of biological role, involved in the binding of tRNA to the ribosomes. In Psychrobacter arcticus (strain DSM 17307 / VKM B-2377 / 273-4), this protein is Small ribosomal subunit protein uS10.